Consider the following 506-residue polypeptide: Histidine ammonia-lyase (506 aa).

The 5-imidazolinone (Ala-Gly) cross-link spans 143-145; sequence ASG. 2,3-didehydroalanine (Ser) is present on S144.

Belongs to the PAL/histidase family. In terms of processing, contains an active site 4-methylidene-imidazol-5-one (MIO), which is formed autocatalytically by cyclization and dehydration of residues Ala-Ser-Gly.

Its subcellular location is the cytoplasm. The enzyme catalyses L-histidine = trans-urocanate + NH4(+). It functions in the pathway amino-acid degradation; L-histidine degradation into L-glutamate; N-formimidoyl-L-glutamate from L-histidine: step 1/3. The sequence is that of Histidine ammonia-lyase from Salmonella paratyphi A (strain ATCC 9150 / SARB42).